Reading from the N-terminus, the 224-residue chain is MIRLAAIDVDGTLTDRDRLISTKAIESIRSAEKKGLTVSLLSGNVIPVVYALKIFLGINGPVFGENGGIMFDNDGSIKKFFSNEGTNKFLEEMSKRTSMRSILTNRWREASTGFDIDPEDVDYVRKEAESRGFVIFYSGYSWHLMNRGEDKAFAVNKLKEMYSLEYDEILVIGDSNNDMPMFQLPVRKACPANATDNIKAVSDFVSDYSYGEEIGQIFKHFELM.

The active-site Nucleophile is D8. Mg(2+) contacts are provided by D8, D10, G11, and G43. Position 151 (K151) interacts with substrate. D174, S175, and D178 together coordinate Mg(2+).

Belongs to the HAD-like hydrolase superfamily. Archaeal SPP-like hydrolase family. As to quaternary structure, homodimer. Requires Mg(2+) as cofactor.

It carries out the reaction 2-phosphoglycolate + H2O = glycolate + phosphate. Its activity is regulated as follows. Inhibited by Ca(2+) ions and by high chloride ion concentration. By contrast, low chloride concentration (up to 50 mM) slightly activate the enzyme. Catalyzes the dephosphorylation of 2-phosphoglycolate. Also has significant, but less efficient, pyrophosphatase activity, since it is able to catalyze the release of phosphate from inorganic pyrophosphate (PPi). The polypeptide is Phosphoglycolate phosphatase (Thermoplasma acidophilum (strain ATCC 25905 / DSM 1728 / JCM 9062 / NBRC 15155 / AMRC-C165)).